The chain runs to 2150 residues: Zinc finger protein sdc-3 (2150 aa).

A dosage compensation domain 1 region spans residues 443-987; it reads QEITSPMFAL…DQVENEEPER (545 aa). Disordered stretches follow at residues 874-894, 1261-1373, 1411-1448, and 1491-1670; these read EKEW…EEED, GSVV…GPEV, FETS…GPIN, and EVLQ…SEKL. Over residues 1267 to 1293 the composition is skewed to polar residues; it reads TNQQEENVTSEGPTLQEGSSIPSSSHI. Over residues 1321 to 1333 the composition is skewed to basic residues; that stretch reads KKSGKTTRGRPKK. The span at 1347–1357 shows a compositional bias: basic and acidic residues; it reads GQKEEAAHEPE. The segment covering 1504-1524 has biased composition (basic residues); sequence SSKKRGRRRKKTPPHIAKARK. The segment at 1508–1516 is sex determination domain; that stretch reads RGRRRKKTP. The span at 1585 to 1598 shows a compositional bias: basic and acidic residues; the sequence is EDLHETERPGHVGE. Positions 1638–1648 are enriched in polar residues; sequence IQSQAGTNASP. 2 consecutive C2H2-type zinc fingers follow at residues 2078-2105 and 2117-2141; these read HKCV…GKLH and DDCQ…NHHH. A dosage compensation domain 2 region spans residues 2080 to 2105; that stretch reads CVQCSIRNQSVYFSSYSLLELHGKLH.

In terms of assembly, component of the SDC complex, which consists of sdc-1, sdc-2 and sdc-3. Within the complex, interacts with sdc-1 and sdc-2. Interacts with dpy-21. Post-translationally, sumoylated. Sumoylation is important for assembly of the dosage compensation complex and its robust binding to the X chromosome. As to expression, expressed in somatic and in germline tissues in hermaphrodites (XX). In males (XO), only present in embryos younger than the 100-cell stage (at protein level).

It is found in the chromosome. Its subcellular location is the nucleus. Component of the SDC complex that functions in sex determination and in X chromosome dosage compensation specifically in hermaphrodite (XX) animals. Plays a central role in the recruitment of the condensin I-like dosage compensation complex to the male sex-determining autosomal gene her-1, thereby contributing to its repression and initiating hermaphrodite sexual development. Involved in the recruitment and assembly of the dosage compensation complex and the dosage compensation protein dpy-21 onto the X chromosomes in hermaphrodites, which leads to a reduction of X-linked gene transcription and an equalization of X-linked gene expression between the sexes. This Caenorhabditis elegans protein is Zinc finger protein sdc-3 (sdc-3).